Reading from the N-terminus, the 430-residue chain is Dihydroorotase (430 aa).

His57 and His59 together coordinate Zn(2+). Substrate is bound by residues 59-61 and Asn91; that span reads HLR. Residues Asp151, His178, and His231 each contribute to the Zn(2+) site. Asn277 is a substrate binding site. A Zn(2+)-binding site is contributed by Asp304. Asp304 is a catalytic residue. Residues His308 and 322–323 contribute to the substrate site; that span reads PG.

Belongs to the metallo-dependent hydrolases superfamily. DHOase family. Class I DHOase subfamily. Zn(2+) is required as a cofactor.

It carries out the reaction (S)-dihydroorotate + H2O = N-carbamoyl-L-aspartate + H(+). It functions in the pathway pyrimidine metabolism; UMP biosynthesis via de novo pathway; (S)-dihydroorotate from bicarbonate: step 3/3. In terms of biological role, catalyzes the reversible cyclization of carbamoyl aspartate to dihydroorotate. The chain is Dihydroorotase from Mycobacterium leprae (strain TN).